The chain runs to 418 residues: 3-isopropylmalate dehydratase large subunit (418 aa).

[4Fe-4S] cluster is bound by residues C299, C359, and C362.

It belongs to the aconitase/IPM isomerase family. LeuC type 2 subfamily. As to quaternary structure, heterodimer of LeuC and LeuD. [4Fe-4S] cluster is required as a cofactor.

It carries out the reaction (2R,3S)-3-isopropylmalate = (2S)-2-isopropylmalate. Its pathway is amino-acid biosynthesis; L-leucine biosynthesis; L-leucine from 3-methyl-2-oxobutanoate: step 2/4. Its function is as follows. Catalyzes the isomerization between 2-isopropylmalate and 3-isopropylmalate, via the formation of 2-isopropylmaleate. This Oleidesulfovibrio alaskensis (strain ATCC BAA-1058 / DSM 17464 / G20) (Desulfovibrio alaskensis) protein is 3-isopropylmalate dehydratase large subunit.